A 580-amino-acid polypeptide reads, in one-letter code: High affinity choline transporter 1 (580 aa).

The Extracellular portion of the chain corresponds to 1 to 6 (MSFHVE). Residues 7-27 (GLVAIILFYLLIFLVGIWAAW) traverse the membrane as a helical segment. Residues 28-48 (KTKNSGNPEERSEAIIVGGRD) lie on the Cytoplasmic side of the membrane. The chain crosses the membrane as a helical span at residues 49 to 69 (IGLLVGGFTMTATWVGGGYIN). The Extracellular portion of the chain corresponds to 70 to 81 (GTAEAVYGPGCG). Residues 82 to 102 (LAWAQAPIGYSLSLILGGLFF) traverse the membrane as a helical segment. The Cytoplasmic portion of the chain corresponds to 103–125 (AKPMRSKGYVTMLDPFQQIYGKR). A helical transmembrane segment spans residues 126–146 (MGGLLFIPALMGEMFWAAAIF). Residues 147-164 (SALGATISVIIDVDVNIS) are Extracellular-facing. Residues 165 to 185 (VIVSALIAILYTLVGGLYSVA) traverse the membrane as a helical segment. Topologically, residues 186–191 (YTDVVQ) are cytoplasmic. A helical membrane pass occupies residues 192–212 (LFCIFIGLWISVPFALSHPAV). The Extracellular portion of the chain corresponds to 213–237 (TDIGFTAVHAKYQSPWLGTIESVEV). Residues 238–258 (YTWLDNFLLLMLGGIPWQAYF) form a helical membrane-spanning segment. Residues 259-274 (QRVLSSSSATYAQVLS) are Cytoplasmic-facing. The helical transmembrane segment at 275 to 295 (FLAAFGCLVMALPAICIGAIG) threads the bilayer. Over 296–317 (ASTDWNQTAYGYPDPKTKEEAD) the chain is Extracellular. N-linked (GlcNAc...) asparagine glycosylation occurs at Asn301. A helical membrane pass occupies residues 318 to 338 (MILPIVLQYLCPVYISFFGLG). The Cytoplasmic portion of the chain corresponds to 339–376 (AVSAAVMSSADSSILSASSMFARNIYQLSFRQNASDKE). Residues 377 to 397 (IVWVMRITVLVFGASATAMAL) form a helical membrane-spanning segment. At 398–406 (LTKTVYGLW) the chain is on the extracellular side. Residues 407 to 427 (YLSSDLVYIIIFPQLLCVLFI) traverse the membrane as a helical segment. Residues 428–435 (KGTNTYGA) are Cytoplasmic-facing. The helical transmembrane segment at 436 to 456 (VAGYIFGLFLRITGGEPYLYL) threads the bilayer. Over 457–481 (QPLIFYPGYYSDKNGIYNQRFPFKT) the chain is Extracellular. Residues 482–502 (LSMVTSFFTNICVSYLAKYLF) form a helical membrane-spanning segment. The tract at residues 502 to 580 (FESGTLPPKL…EGSGTEDNLQ (79 aa)) is mediates interaction with SEC14L1. At 503–580 (ESGTLPPKLD…EGSGTEDNLQ (78 aa)) the chain is on the cytoplasmic side. The short motif at 527 to 532 (DKTILV) is the Dileucine-like motif element.

Belongs to the sodium:solute symporter (SSF) (TC 2.A.21) family. As to quaternary structure, homooligomerizes at cell surface. Interacts with SEC14L1; may regulate SLC5A7. Post-translationally, phosphorylated by PKC and dephosphorylated by PP1/PP2A. Found in spinal cord, brain-stem, mid-brain and striatum. Specific for cholinergic neurons.

The protein resides in the presynaptic cell membrane. It localises to the cell projection. Its subcellular location is the axon. The protein localises to the early endosome membrane. It is found in the cytoplasmic vesicle. The protein resides in the secretory vesicle. It localises to the synaptic vesicle membrane. The catalysed reaction is choline(out) + n Na(+)(out) = choline(in) + n Na(+)(in). Its activity is regulated as follows. Choline uptake activity is regulated by SLC5A7/CHT1 internalization (inactive form) from the cell surface and recycling of internalized SLC5A7/CHT1 into the cell surface (active form). Activated by extracellular chloride ion. Specifically inhibited by nanomolar concentrations of hemicholinium 3. Its function is as follows. High-affinity Na(+)-coupled choline transmembrane symporter. Functions as an electrogenic, voltage-dependent transporter with variable charge/choline stoichiometry. Choline uptake and choline-induced current is also Cl(-)-dependent where Cl(-) is likely a regulatory ion rather than cotransported ion. Plays a critical role in acetylcholine (ACh) synthesis by taking up the substrate choline from the synaptic cleft into the presynaptic nerve terminals after neurotransmitter release. SLC5A7/CHT1-mediated choline high-affinity transport in cholinergic neurons is the rate-limiting step for production of ACh, thereby facilitating communication by subsequent action potentials. Localized predominantly in presynaptic terminal intracellular organelles, and translocated to the plasma membrane in active form in response to neuronal activity. The polypeptide is High affinity choline transporter 1 (Mus musculus (Mouse)).